Reading from the N-terminus, the 897-residue chain is N-terminal acetyltransferase A complex auxiliary subunit NAA15 (897 aa).

7 TPR repeats span residues 77–110 (HVCW…DPDN), 111–144 (LEIL…KPNH), 189–222 (TEMI…IVDK), 223–256 (LSYK…NPDN), 298–331 (SSAV…KGVP), 380–413 (LWTL…TPTV), and 488–523 (QCMW…YADI). 2 disordered regions span residues 578 to 640 (KSTA…DPHG) and 863 to 897 (SRKS…SVAT). Basic and acidic residues predominate over residues 602–617 (KAEARAKKEAESKSEE). The span at 863–872 (SRKSNENGDT) shows a compositional bias: polar residues.

As to quaternary structure, part of the NatA complex. Associates with ribosomes. Interacts with NAA10. As to expression, expressed in leaves, roots, shoots and flowers.

Auxiliary subunit of the NatA N-alpha-acetyltransferase complex. Required for male gametocyte development, embryogenesis, suspensor development and the formation of the quiescent center (QC) in the root meristem. Involved in plant immunity through the regulation of SNC1 stability. Required for embryo development. The sequence is that of N-terminal acetyltransferase A complex auxiliary subunit NAA15 from Arabidopsis thaliana (Mouse-ear cress).